A 409-amino-acid chain; its full sequence is Accessory Sec system protein translocase subunit SecY2 (409 aa).

10 consecutive transmembrane segments (helical) span residues 16-36 (ILIT…PIPG), 61-81 (LSQV…MILL), 104-124 (VVML…FQYH), 132-152 (LLLA…IGNL), 161-181 (MTIL…PLIF), 190-210 (LAII…ITFE), 242-262 (GMAF…IILL), 286-306 (GVVI…FVNI), 341-361 (LFGT…LLFA), and 374-394 (TGIF…FQVI).

It belongs to the SecY/SEC61-alpha family. SecY2 subfamily. As to quaternary structure, component of the accessory SecA2/SecY2 protein translocase complex required to export cell wall proteins. May form heterotrimers with SecE and SecG subunits.

Its subcellular location is the cell membrane. Its function is as follows. Part of the accessory SecA2/SecY2 system specifically required for export of possible cell wall proteins. The central subunit of a protein translocation channel. The sequence is that of Accessory Sec system protein translocase subunit SecY2 from Streptococcus agalactiae serotype III (strain NEM316).